The primary structure comprises 341 residues: MGTPLRRSRRLEGLNPLSLENLPDPEVSRAKRALVDFKSNPEETRELESPRVPPLDLVSPQPQPETSPESPCPKQDAGFGSPQRQPEPHPGSLQLHQDLGLDSPAGQTESNPESPQREQSSKLSPTQDSEVAHAKEEVIPRSPEPCPGQQAPGPEPSQPAQELAFQAPSSPERQLEPSKLPPAGESVTGSLDLKKRVIASPQAPASKKLKEELPVIPKGKPKSGRVWKDRSKKRFSQMVQDKPLRTSWQRKMKERQERKLAKDFARHLEEEKQRRRQEKKERRAENLRRRLENERKAEIVQVIRNPAKLKKAKKKQLRSIQKRDTLALLQKQPPQRPVAKV.

The segment at 1–341 is disordered; it reads MGTPLRRSRR…QPPQRPVAKV (341 aa). Ser-18 carries the phosphoserine modification. Over residues 26-49 the composition is skewed to basic and acidic residues; sequence EVSRAKRALVDFKSNPEETRELES. Ser-59 bears the Phosphoserine mark. Low complexity predominate over residues 64 to 73; that stretch reads PETSPESPCP. At Thr-66 the chain carries Phosphothreonine. 7 positions are modified to phosphoserine: Ser-67, Ser-70, Ser-81, Ser-92, Ser-103, Ser-114, and Ser-124. Polar residues predominate over residues 105–114; the sequence is AGQTESNPES. Positions 130–139 are enriched in basic and acidic residues; sequence EVAHAKEEVI. Phosphoserine occurs at positions 142, 169, 170, and 200. A compositionally biased stretch (basic residues) spans 219-235; that stretch reads GKPKSGRVWKDRSKKRF. The span at 254 to 298 shows a compositional bias: basic and acidic residues; the sequence is ERQERKLAKDFARHLEEEKQRRRQEKKERRAENLRRRLENERKAE. Residues 261–304 adopt a coiled-coil conformation; it reads AKDFARHLEEEKQRRRQEKKERRAENLRRRLENERKAEIVQVIR. The segment covering 307–317 has biased composition (basic residues); sequence AKLKKAKKKQL. A Citrulline modification is found at Arg-323.

Citrullinated by PADI4.

It is found in the nucleus. Its subcellular location is the chromosome. The protein localises to the nucleolus. In terms of biological role, required for proper chromosome segregation during mitosis and error-free mitotic progression. This Rattus norvegicus (Rat) protein is Coiled-coil domain-containing protein 86.